Consider the following 67-residue polypeptide: Small ribosomal subunit protein eS17 (67 aa).

The protein belongs to the eukaryotic ribosomal protein eS17 family. Part of the 30S ribosomal subunit.

The polypeptide is Small ribosomal subunit protein eS17 (Pyrococcus furiosus (strain ATCC 43587 / DSM 3638 / JCM 8422 / Vc1)).